Reading from the N-terminus, the 514-residue chain is FAD-dependent monooxygenase CPUR_05423 (514 aa).

FAD contacts are provided by valine 79 and arginine 146. The active site involves arginine 227. Residues aspartate 358 and glycine 371 each coordinate FAD.

Belongs to the paxM FAD-dependent monooxygenase family. Requires FAD as cofactor.

The protein operates within pigment biosynthesis. Functionally, FAD-dependent monooxygenase; part of the ergochrome gene cluster responsible for the typical purple-black color of the ergot sclerotia. The ergochrome gene cluster produces several ergot pigments including the yellow ergochrome secalonic acid and its derivatives, as well as the red anthraquinones endocrocin and clavorubin. The pathway begins with the synthesis of atrochrysone thioester by the polyketide synthase (PKS) CPUR_05437. The atrochrysone carboxyl ACP thioesterase CPUR_05436 then breaks the thioester bond and releases the atrochrysone carboxylic acid from CPUR_05437. The atrochrysone carboxylic acid is then converted to atrochrysone which is further transformed into emodin anthrone. The next step is performed by the anthrone oxygenase CPUR_05434 that catalyzes the oxidation of emodinanthrone to emodin. Emodin is further modified to yield monodictyphenone via several steps involving CPUR_05427, CPUR_05428, CPUR_05429 and CPUR_05430. The short chain dehydrogenase/reductase CPUR_05418 then catalyzes the C-5 ketoreduction to give the xanthone skeleton of the monomeric units. Ergochromes formation requires further dimerization steps of different xanthone units, probably catalyzed by the cytochrome P450 monooxygenase CPUR_05419. CPUR_05425, CPUR_05426 and CPUR_05431 are unique to Claviceps, thus it is likely that they are involved in further modification of xanthone units or in their dimerization. The yellow ergochromes and the red anthraquinone pigments endocrocin and clavorubin are products from the same PKS derived precursors and the latter are likely shunt products in the pathway of xanthone biosynthesis. It is proposed that atrochrysone carboxylic acid released from the PKS CPUR_05437 can also be converted to endocrocin anthrone which is further oxidized into endocrocin by CPUR_05435. Endocrocin could be then modified to clavorubin, possibly by CPUR_05423 and CPUR_05431. Clavorubin is the principal anthraquinone metabolite produced by the cluster with a much higher yield compared to endocrocin. The protein is FAD-dependent monooxygenase CPUR_05423 of Claviceps purpurea (strain 20.1) (Ergot fungus).